The chain runs to 65 residues: Large ribosomal subunit protein bL33c (65 aa).

This sequence belongs to the bacterial ribosomal protein bL33 family.

The protein localises to the plastid. The sequence is that of Large ribosomal subunit protein bL33c from Aneura mirabilis (Parasitic liverwort).